The primary structure comprises 1679 residues: Lysophospholipase NTE1 (1679 aa).

Residues 1-20 are compositionally biased toward low complexity; the sequence is MRSMNCTTNNTNNTGQNTKN. The disordered stretch occupies residues 1–21; the sequence is MRSMNCTTNNTNNTGQNTKNS. The Cytoplasmic portion of the chain corresponds to 1-49; it reads MRSMNCTTNNTNNTGQNTKNSLGSSFNSSNYTSYRFQTCLTDQIISEAQ. A helical transmembrane segment spans residues 50-70; the sequence is TWSLSSLFNFSWVVSYFVMGA. The Lumenal portion of the chain corresponds to 71–103; sequence SRMIFRYGWYLATLSLLRIPKWIFFKLHHVQFT. A helical membrane pass occupies residues 104 to 124; the sequence is LSFWLILFALAVIVFVTYTIM. The Cytoplasmic portion of the chain corresponds to 125–1679; sequence KERILSQYKR…EFLLHRRNSI (1555 aa). A compositionally biased stretch (basic and acidic residues) spans 261–274; that stretch reads SDKDHGDETDHSDT. The disordered stretch occupies residues 261–304; that stretch reads SDKDHGDETDHSDTDGLDDQDRDEEDEEEDDDIDNYDTKSCSSN. The segment covering 275-295 has biased composition (acidic residues); that stretch reads DGLDDQDRDEEDEEEDDDIDN. Phosphoserine is present on residues S300 and S312. Disordered regions lie at residues 498–527 and 586–672; these read SSGS…KPSD and DILS…VSPR. Polar residues-rich tracts occupy residues 592–606 and 630–652; these read PIHN…GINT and FSSL…LDNT. Residues S632, S634, S653, S661, S670, S680, and S739 each carry the phosphoserine modification. Positions 775–800 are disordered; the sequence is KEYTISNKRHNKSKSQDKKKPRAYKE. Positions 788–800 are enriched in basic and acidic residues; the sequence is KSQDKKKPRAYKE. The residue at position 803 (T803) is a Phosphothreonine. A nucleoside 3',5'-cyclic phosphate-binding positions include 803 to 947 and 943 to 1074; these read TPNL…LTKL and SLTK…VAKK. The segment at 855-882 is disordered; it reads SSSVVSSMSKPEQVSAQSSHKGENPHHT. The segment covering 862 to 873 has biased composition (polar residues); sequence MSKPEQVSAQSS. Positions 1373–1537 constitute a PNPLA domain; the sequence is LVLGGGGARG…VDNLPVTEMR (165 aa). Residues 1377–1382 carry the GXGXXG motif; it reads GGGARG. Positions 1404-1408 match the GXSXG motif; the sequence is GTSIG. Catalysis depends on S1406, which acts as the Nucleophile. The Proton acceptor role is filled by D1524. A DGA/G motif is present at residues 1524 to 1526; sequence DGG.

This sequence belongs to the NTE family.

The protein localises to the endoplasmic reticulum membrane. It is found in the lipid droplet. It carries out the reaction a 1-acyl-sn-glycero-3-phosphocholine + H2O = sn-glycerol 3-phosphocholine + a fatty acid + H(+). The catalysed reaction is a 1,2-diacyl-sn-glycero-3-phosphocholine + 2 H2O = sn-glycerol 3-phosphocholine + 2 a carboxylate + 2 H(+). Positively regulated by SEC14. Inhibited by organophosphorus esters in the order phenyl saligenin phosphate (PSP) &gt; phenyldipentyl phosphinate (PDPP) = diisopropyl fluorophosphate (DFP) &gt; and paraoxon (PXN). Its function is as follows. Intracellular phospholipase B that catalyzes the double deacylation of phosphatidylcholine (PC) to glycerophosphocholine (GroPCho). Plays an important role in membrane lipid homeostasis. Responsible for the rapid PC turnover in response to inositol, elevated temperatures, or when choline is present in the growth medium. NTE1 activity impacts the repressing transcriptional activity of OPI1, the main regulator of phospholipid synthesis gene transcription. The chain is Lysophospholipase NTE1 (NTE1) from Saccharomyces cerevisiae (strain ATCC 204508 / S288c) (Baker's yeast).